We begin with the raw amino-acid sequence, 379 residues long: Deoxyguanosinetriphosphate triphosphohydrolase-like protein (379 aa).

An HD domain is found at 69–200; sequence RLTHTIEVAQ…ANLADEIAYS (132 aa).

This sequence belongs to the dGTPase family. Type 2 subfamily.

In Azoarcus sp. (strain BH72), this protein is Deoxyguanosinetriphosphate triphosphohydrolase-like protein.